A 734-amino-acid chain; its full sequence is DNA replication licensing factor MCM5 (734 aa).

S2 bears the N-acetylserine mark. The MCM domain maps to 331 to 537 (IYELISKSIA…RDVMLAKHVI (207 aa)). R371 contributes to the ADP binding site. 2 positions are modified to N6-acetyllysine: K392 and K396. Positions 512-515 (SRFD) match the Arginine finger motif. S605 is subject to Phosphoserine.

This sequence belongs to the MCM family. Component of the MCM2-7 complex. The complex forms a toroidal hexameric ring with the proposed subunit order MCM2-MCM6-MCM4-MCM7-MCM3-MCM5. Component of the CMG helicase complex, a hexameric ring of related MCM2-7 subunits stabilized by CDC45 and the tetrameric GINS complex. Interacts with ANKRD17. Interacts with MCMBP. Interacts with TONSL; the interaction is direct.

The protein localises to the nucleus. Its subcellular location is the chromosome. It is found in the cytoplasm. The protein resides in the cytosol. The catalysed reaction is ATP + H2O = ADP + phosphate + H(+). Functionally, acts as a component of the MCM2-7 complex (MCM complex) which is the replicative helicase essential for 'once per cell cycle' DNA replication initiation and elongation in eukaryotic cells. Core component of CDC45-MCM-GINS (CMG) helicase, the molecular machine that unwinds template DNA during replication, and around which the replisome is built. The active ATPase sites in the MCM2-7 ring are formed through the interaction surfaces of two neighboring subunits such that a critical structure of a conserved arginine finger motif is provided in trans relative to the ATP-binding site of the Walker A box of the adjacent subunit. The six ATPase active sites, however, are likely to contribute differentially to the complex helicase activity. This chain is DNA replication licensing factor MCM5, found in Bos taurus (Bovine).